The sequence spans 427 residues: Peptidase B (427 aa).

The Mn(2+) site is built by K195 and D200. Residue K207 is part of the active site. D218, D277, and E279 together coordinate Mn(2+). R281 is an active-site residue.

The protein belongs to the peptidase M17 family. As to quaternary structure, homohexamer. It depends on Mn(2+) as a cofactor.

Its subcellular location is the cytoplasm. The enzyme catalyses Release of an N-terminal amino acid, Xaa, from a peptide or arylamide. Xaa is preferably Glu or Asp but may be other amino acids, including Leu, Met, His, Cys and Gln.. In terms of biological role, probably plays an important role in intracellular peptide degradation. This is Peptidase B from Shigella boydii serotype 18 (strain CDC 3083-94 / BS512).